The following is a 394-amino-acid chain: NAC domain-containing protein 26 (394 aa).

The NAC domain occupies 7–156 (VPPGFRFHPT…GWVVCRVFKK (150 aa)). Residues 107–162 (IGMRKTLVFYKGRAPNGQKSDWIMHEYRLETSENGTPQEEGWVVCRVFKKKLAATV) mediate DNA binding.

This sequence belongs to the plant vascular related NAC-domain protein family. Interacts with NAC083/VNI2. Detected in root vessels of protoxylems, outermost metaxylems, inner metaxylems, shoots and hypocotyls. Expressed in roots, hypocotyls, cotyledons and leaves. Expressed in developing xylems. Specifically expressed in vessels in the secondary xylem of the root-hypocotyl region, and in vessels but not in interfascicular fibers in stems.

Its subcellular location is the nucleus. Its function is as follows. Transcription activator that binds to the secondary wall NAC binding element (SNBE), 5'-(T/A)NN(C/T)(T/C/G)TNNNNNNNA(A/C)GN(A/C/T)(A/T)-3', in the promoter of target genes. Involved in xylem formation by promoting the expression of secondary wall-associated transcription factors and of genes involved in secondary wall biosynthesis and programmed cell death, genes driven by the secondary wall NAC binding element (SNBE). Triggers thickening of secondary walls. This Arabidopsis thaliana (Mouse-ear cress) protein is NAC domain-containing protein 26.